A 72-amino-acid chain; its full sequence is Translation initiation factor IF-1 (72 aa).

Residues 1-72 (MSKSDYIELE…TKGRIIFRHK (72 aa)) enclose the S1-like domain.

This sequence belongs to the IF-1 family. As to quaternary structure, component of the 30S ribosomal translation pre-initiation complex which assembles on the 30S ribosome in the order IF-2 and IF-3, IF-1 and N-formylmethionyl-tRNA(fMet); mRNA recruitment can occur at any time during PIC assembly.

Its subcellular location is the cytoplasm. Its function is as follows. One of the essential components for the initiation of protein synthesis. Stabilizes the binding of IF-2 and IF-3 on the 30S subunit to which N-formylmethionyl-tRNA(fMet) subsequently binds. Helps modulate mRNA selection, yielding the 30S pre-initiation complex (PIC). Upon addition of the 50S ribosomal subunit IF-1, IF-2 and IF-3 are released leaving the mature 70S translation initiation complex. The protein is Translation initiation factor IF-1 of Ruthia magnifica subsp. Calyptogena magnifica.